We begin with the raw amino-acid sequence, 157 residues long: 2-C-methyl-D-erythritol 2,4-cyclodiphosphate synthase (157 aa).

Asp8 and His10 together coordinate a divalent metal cation. Residues 8-10 (DVH) and 34-35 (HS) each bind 4-CDP-2-C-methyl-D-erythritol 2-phosphate. Residue His42 participates in a divalent metal cation binding. 4-CDP-2-C-methyl-D-erythritol 2-phosphate is bound by residues 56 to 58 (DIG), 61 to 65 (FPDTD), 100 to 106 (AQAPKML), 132 to 135 (TTTE), Phe139, and Arg142.

It belongs to the IspF family. As to quaternary structure, homotrimer. It depends on a divalent metal cation as a cofactor.

It carries out the reaction 4-CDP-2-C-methyl-D-erythritol 2-phosphate = 2-C-methyl-D-erythritol 2,4-cyclic diphosphate + CMP. It functions in the pathway isoprenoid biosynthesis; isopentenyl diphosphate biosynthesis via DXP pathway; isopentenyl diphosphate from 1-deoxy-D-xylulose 5-phosphate: step 4/6. In terms of biological role, involved in the biosynthesis of isopentenyl diphosphate (IPP) and dimethylallyl diphosphate (DMAPP), two major building blocks of isoprenoid compounds. Catalyzes the conversion of 4-diphosphocytidyl-2-C-methyl-D-erythritol 2-phosphate (CDP-ME2P) to 2-C-methyl-D-erythritol 2,4-cyclodiphosphate (ME-CPP) with a corresponding release of cytidine 5-monophosphate (CMP). This chain is 2-C-methyl-D-erythritol 2,4-cyclodiphosphate synthase, found in Erwinia tasmaniensis (strain DSM 17950 / CFBP 7177 / CIP 109463 / NCPPB 4357 / Et1/99).